The following is a 1956-amino-acid chain: Sodium channel protein type 10 subunit alpha (1956 aa).

The Cytoplasmic portion of the chain corresponds to 1-125 (MELPFASVGT…FNLIRRTAIK (125 aa)). The tract at residues 31–54 (HRAAKKARTKHRGQEDKGEKPRPQ) is disordered. Positions 32-41 (RAAKKARTKH) are enriched in basic residues. A compositionally biased stretch (basic and acidic residues) spans 42–54 (RGQEDKGEKPRPQ). An I repeat occupies 116 to 404 (FNLIRRTAIK…VTMAYEEQSQ (289 aa)). A helical transmembrane segment spans residues 126-149 (VSVHSWFSIFITITILVNCVCMTR). The Extracellular portion of the chain corresponds to 150–154 (TDLPE). A helical transmembrane segment spans residues 155–174 (KVEYVFTVIYTFEALIKILA). The Cytoplasmic segment spans residues 175 to 187 (RGFCLNEFTYLRD). The helical transmembrane segment at 188–206 (PWNWLDFSVITLAYVGAAI) threads the bilayer. Topologically, residues 207–212 (DLRGIS) are extracellular. Residues 213–232 (GLRTFRVLRALKTVSVIPGL) traverse the membrane as a helical; Voltage-sensor segment. The Cytoplasmic portion of the chain corresponds to 233–248 (KVIVGALIHSVRKLAD). Residues 249-272 (VTILTVFCLSVFALVGLQLFKGNL) form a helical membrane-spanning segment. The Extracellular portion of the chain corresponds to 273-340 (KNKCIRNGTD…PDFNYTSFDS (68 aa)). An intrachain disulfide couples Cys-276 to Cys-318. N-linked (GlcNAc...) asparagine glycosylation is found at Asn-279, Asn-288, Asn-311, and Asn-334. The pore-forming intramembrane region spans 341 to 365 (FAWAFLSLFRLMTQDSWERLYQQTL). The Extracellular segment spans residues 366-372 (RASGKMY). Residues 373 to 398 (MVFFVLVIFLGSFYLVNLILAVVTMA) traverse the membrane as a helical segment. Over 399–658 (YEEQSQATIA…KWRKFKMALF (260 aa)) the chain is Cytoplasmic. Phosphoserine is present on residues Ser-440, Ser-443, Ser-466, and Ser-478. A compositionally biased stretch (polar residues) spans 441–453 (LQSHSGSPLASKN). Disordered regions lie at residues 441–484 (LQSH…YNQR) and 537–581 (LLGR…AGAP). Over residues 475–484 (SPQSDPYNQR) the composition is skewed to polar residues. Ser-611 and Ser-614 each carry phosphoserine. An II repeat occupies 646–910 (CCPKWRKFKM…EDDGEVNNLQ (265 aa)). The helical transmembrane segment at 659 to 683 (ELVTDPFAELTITLCIVVNTVFMAM) threads the bilayer. Topologically, residues 684–694 (EHYPMTDAFDA) are extracellular. The helical transmembrane segment at 695–718 (MLQAGNIVFTVFFTMEMAFKIIAF) threads the bilayer. Topologically, residues 719-726 (DPYYYFQK) are cytoplasmic. A helical membrane pass occupies residues 727–746 (KWNIFDCVIVTVSLLELSAS). The Extracellular segment spans residues 747-752 (KKGSLS). The chain crosses the membrane as a helical; Voltage-sensor span at residues 753–772 (VLRTFRLLRVFKLAKSWPTL). Residues 773–788 (NTLIKIIGNSVGALGN) are Cytoplasmic-facing. A helical membrane pass occupies residues 789–809 (LTFILAIIVFIFALVGKQLLS). Topologically, residues 810–833 (EDYGCRKDGVSVWNGEKLRWHMCD) are extracellular. Positions 834-854 (FFHSFLVVFRILCGEWIENMW) form an intramembrane region, pore-forming. The Extracellular segment spans residues 855-863 (VCMEVSQKS). The cysteines at positions 856 and 865 are disulfide-linked. Residues 864-889 (ICLILFLTVMVLGNLVVLNLFIALLL) form a helical membrane-spanning segment. The Cytoplasmic segment spans residues 890 to 1148 (NSFSADNLTA…GWQVRKTCYR (259 aa)). Residues 1008–1094 (DELEEDMEQA…SEGSTVDCPD (87 aa)) are disordered. Residues 1141–1450 (QVRKTCYRIV…KKYYNAMKKL (310 aa)) form an III repeat. The chain crosses the membrane as a helical span at residues 1149–1172 (IVEHSWFESFIIFMILLSSGALAF). Over 1173 to 1185 (EDNYLEEKPRVKS) the chain is Extracellular. The helical transmembrane segment at 1186–1211 (VLEYTDRVFTFIFVFEMLLKWVAYGF) threads the bilayer. The Cytoplasmic portion of the chain corresponds to 1212–1217 (KKYFTN). A helical membrane pass occupies residues 1218 to 1239 (AWCWLDFLIVNISLTSLIAKIL). Residues 1240-1243 (EYSD) lie on the Extracellular side of the membrane. Residues 1244 to 1265 (VASIKALRTLRALRPLRALSRF) traverse the membrane as a helical; Voltage-sensor segment. Residues 1266-1284 (EGMRVVVDALVGAIPSIMN) lie on the Cytoplasmic side of the membrane. Residues 1285 to 1312 (VLLVCLIFWLIFSIMGVNLFAGKFSKCV) traverse the membrane as a helical segment. Topologically, residues 1313 to 1354 (DTRNNPFSNVNSTMVNNKSECHNQNSTGHFFWVNVKVNFDNV) are extracellular. Residues Asn-1323, Asn-1329, and Asn-1337 are each glycosylated (N-linked (GlcNAc...) asparagine). Positions 1355–1376 (AMGYLALLQVATFKGWMDIMYA) form an intramembrane region, pore-forming. Topologically, residues 1377–1392 (AVDSGEINSQPNWENN) are extracellular. A helical membrane pass occupies residues 1393–1419 (LYMYLYFVVFIIFGGFFTLNLFVGVII). Topologically, residues 1420 to 1472 (DNFNQQKKKLGGQDIFMTEEQKKYYNAMKKLGSKKPQKPIPRPLNKYQGFVFD) are cytoplasmic. Phosphoserine; by PKC is present on Ser-1452. The stretch at 1459-1758 (IPRPLNKYQG…WEKFDPEATQ (300 aa)) is one IV repeat. Residues 1473–1496 (IVTRQAFDIIIMVLICLNMITMMV) form a helical membrane-spanning segment. Over 1497–1507 (ETDEQGEEKTK) the chain is Extracellular. Residues 1508–1531 (VLGRINQFFVAVFTGECVMKMFAL) form a helical membrane-spanning segment. The Cytoplasmic segment spans residues 1532–1537 (RQYYFT). A helical transmembrane segment spans residues 1538-1561 (NGWNVFDFIVVILSIGSLLFSAIL). The Extracellular segment spans residues 1562–1573 (KSLENYFSPTLF). The helical; Voltage-sensor transmembrane segment at 1574-1595 (RVIRLARIGRILRLIRAAKGIR) threads the bilayer. Residues 1596–1610 (TLLFALMMSLPALFN) lie on the Cytoplasmic side of the membrane. Residues 1611-1633 (IGLLLFLVMFIYSIFGMASFANV) traverse the membrane as a helical segment. Over 1634–1647 (VDEAGIDDMFNFKT) the chain is Extracellular. An intramembrane region (pore-forming) is located at residues 1648-1670 (FGNSMLCLFQITTSAGWDGLLSP). Residues 1671-1698 (ILNTGPPYCDPNLPNSNGSRGNCGSPAV) lie on the Extracellular side of the membrane. A glycan (N-linked (GlcNAc...) asparagine) is linked at Asn-1687. A helical membrane pass occupies residues 1699-1723 (GIIFFTTYIIISFLIVVNMYIAVIL). The Cytoplasmic segment spans residues 1724-1956 (ENFNVATEES…AKEGNSPGPQ (233 aa)). Positions 1852–1881 (EDLSATVIQKAYRSYMLHRSLTLSNTLHVP) constitute an IQ domain. A disordered region spans residues 1906–1956 (DKSETASATSFPPSYDSVTRGLSDRANINPSSSMQNEDEVAAKEGNSPGPQ). A compositionally biased stretch (polar residues) spans 1931–1940 (ANINPSSSMQ).

This sequence belongs to the sodium channel (TC 1.A.1.10) family. Nav1.8/SCN10A subfamily. As to quaternary structure, the channel consists of an ion conducting pore forming alpha-subunit regulated by one or more associated auxiliary subunits SCN1B, SCN2B and SCN3B; electrophysiological properties may vary depending on the type of the associated beta subunits. Found in a number of complexes with PRX, DYNLT1 and PDZD2. Interacts with proteins such as FSTL1, PRX, DYNLT1, PDZD2, S100A10 and many others. Interacts with NEDD4 and NEDD4L. Post-translationally, ubiquitinated by NEDD4L; which promotes its endocytosis. Phosphorylation at Ser-1452 by PKC in a highly conserved cytoplasmic loop slows inactivation of the sodium channel and reduces peak sodium currents. In terms of processing, lacks the cysteine which covalently binds the conotoxin GVIIJ. This cysteine (position 815) is speculated in other sodium channel subunits alpha to be implied in covalent binding with the sodium channel subunit beta-2 or beta-4. As to expression, expressed in dorsal root ganglia, trigeminal ganglia, nodose ganglia and sciatic nerve.

It localises to the cell membrane. The catalysed reaction is Na(+)(in) = Na(+)(out). Tetrodotoxin-resistant channel that mediates the voltage-dependent sodium ion permeability of excitable membranes. Assuming opened or closed conformations in response to the voltage difference across the membrane, the protein forms a sodium-selective channel through which sodium ions may pass in accordance with their electrochemical gradient. Plays a role in neuropathic pain mechanisms. The chain is Sodium channel protein type 10 subunit alpha from Rattus norvegicus (Rat).